The sequence spans 373 residues: Cobalt-precorrin-5B C(1)-methyltransferase (373 aa).

The protein belongs to the CbiD family.

The enzyme catalyses Co-precorrin-5B + S-adenosyl-L-methionine = Co-precorrin-6A + S-adenosyl-L-homocysteine. It participates in cofactor biosynthesis; adenosylcobalamin biosynthesis; cob(II)yrinate a,c-diamide from sirohydrochlorin (anaerobic route): step 6/10. Catalyzes the methylation of C-1 in cobalt-precorrin-5B to form cobalt-precorrin-6A. This Listeria welshimeri serovar 6b (strain ATCC 35897 / DSM 20650 / CCUG 15529 / CIP 8149 / NCTC 11857 / SLCC 5334 / V8) protein is Cobalt-precorrin-5B C(1)-methyltransferase.